Consider the following 368-residue polypeptide: Glutamate 5-kinase (368 aa).

ATP is bound at residue Lys-9. Substrate is bound by residues Ser-49, Asp-136, and Asn-148. ATP-binding positions include 168–169 (TD) and 210–216 (TGGMMTK). The PUA domain maps to 275 to 353 (AGIITIDNGA…ADIENVLGYE (79 aa)).

This sequence belongs to the glutamate 5-kinase family.

It is found in the cytoplasm. It carries out the reaction L-glutamate + ATP = L-glutamyl 5-phosphate + ADP. It participates in amino-acid biosynthesis; L-proline biosynthesis; L-glutamate 5-semialdehyde from L-glutamate: step 1/2. Catalyzes the transfer of a phosphate group to glutamate to form L-glutamate 5-phosphate. The protein is Glutamate 5-kinase of Haemophilus influenzae (strain PittEE).